The primary structure comprises 282 residues: Deoxyribonuclease-1 (282 aa).

The N-terminal stretch at 1–22 is a signal peptide; it reads MRGTRLMGLLLALAGLLQLGLS. A glycan (N-linked (GlcNAc...) asparagine) is linked at asparagine 40. Glutamate 100 is a catalytic residue. A disulfide bond links cysteine 123 and cysteine 126. Residue histidine 156 is part of the active site. The cysteines at positions 195 and 231 are disulfide-linked.

It belongs to the DNase I family. It depends on Ca(2+) as a cofactor. Requires Mg(2+) as cofactor. Post-translationally, the only differences between the A and B forms and the C and D forms are in the compositions of the carbohydrate bound to Asn-40.

It localises to the secreted. It is found in the zymogen granule. The protein resides in the nucleus envelope. The catalysed reaction is Endonucleolytic cleavage to 5'-phosphodinucleotide and 5'-phosphooligonucleotide end-products.. Its function is as follows. Serum endocuclease secreted into body fluids by a wide variety of exocrine and endocrine organs. Expressed by non-hematopoietic tissues and preferentially cleaves protein-free DNA. Among other functions, seems to be involved in cell death by apoptosis. Binds specifically to G-actin and blocks actin polymerization. Together with DNASE1L3, plays a key role in degrading neutrophil extracellular traps (NETs). NETs are mainly composed of DNA fibers and are released by neutrophils to bind pathogens during inflammation. Degradation of intravascular NETs by DNASE1 and DNASE1L3 is required to prevent formation of clots that obstruct blood vessels and cause organ damage following inflammation. The protein is Deoxyribonuclease-1 (DNASE1) of Bos taurus (Bovine).